Here is a 302-residue protein sequence, read N- to C-terminus: Snake venom metalloprotease inhibitor 02A10 (302 aa).

A signal peptide spans 1 to 23 (MSVSRLAASGLLLVSLLALALDG). Residues 24–47 (KPVEKWSPWLWPPRPRPPIPPLQQ) constitute a propeptide that is removed on maturation. The tract at residues 32–302 (WLWPPRPRPP…CPKLPPSGGH (271 aa)) is disordered. Positions 33–44 (LWPPRPRPPIPP) are enriched in pro residues. Position 48 is a pyrrolidone carboxylic acid (Gln48). Positions 51-58 (LDPPIPQQ) are excised as a propeptide. Gln59 carries the post-translational modification Pyrrolidone carboxylic acid. A propeptide spanning residues 62–69 (LDPPIPQQ) is cleaved from the precursor. Residue Gln70 is modified to Pyrrolidone carboxylic acid. Residues 73 to 80 (LDPPIPQQ) constitute a propeptide that is removed on maturation. At Gln81 the chain carries Pyrrolidone carboxylic acid. Positions 84 to 91 (LNPPIPQQ) are excised as a propeptide. Residue Gln92 is modified to Pyrrolidone carboxylic acid. Residues 95–102 (LDPPIPQQ) constitute a propeptide that is removed on maturation. At Gln103 the chain carries Pyrrolidone carboxylic acid. Positions 106-113 (LNPPIPQQ) are excised as a propeptide. Gln114 carries the post-translational modification Pyrrolidone carboxylic acid. Positions 117–124 (LNPPIPQQ) are excised as a propeptide. Gln125 is modified (pyrrolidone carboxylic acid). A propeptide spanning residues 128-135 (LNPPIPQQ) is cleaved from the precursor. Gln136 carries the post-translational modification Pyrrolidone carboxylic acid. A propeptide spanning residues 139–146 (LNPPIPQQ) is cleaved from the precursor. Gln147 is subject to Pyrrolidone carboxylic acid. A propeptide spanning residues 150 to 157 (LDPPIPQQ) is cleaved from the precursor. Pyrrolidone carboxylic acid is present on Gln158. Residues 161 to 168 (LDPPIPQQ) constitute a propeptide that is removed on maturation. Position 169 is a pyrrolidone carboxylic acid (Gln169). The propeptide occupies 172-179 (LDPPIPQQ). Position 180 is a pyrrolidone carboxylic acid (Gln180). Positions 183–190 (LNPPIPQQ) are excised as a propeptide. Gln191 carries the post-translational modification Pyrrolidone carboxylic acid. Positions 194–201 (LDPPIPQQ) are excised as a propeptide. Gln202 is modified (pyrrolidone carboxylic acid). A propeptide spanning residues 205 to 212 (LDPPIPQQ) is cleaved from the precursor. Gln213 is modified (pyrrolidone carboxylic acid). Positions 216–223 (LNPPIPQQ) are excised as a propeptide. Gln224 is subject to Pyrrolidone carboxylic acid. Residues 227-273 (QRPLQPEVPSLMELHQERQKQGRMMHHDEDPGDAAEGPRRQKKEPGK) constitute a propeptide that is removed on maturation. Basic and acidic residues-rich tracts occupy residues 240-255 (LHQE…HHDE) and 262-273 (EGPRRQKKEPGK). An intrachain disulfide couples Cys279 to Cys293. The propeptide occupies 294–302 (PKLPPSGGH).

It in the C-terminal section; belongs to the natriuretic peptide family. In terms of tissue distribution, expressed by the venom gland.

The protein resides in the secreted. Its function is as follows. pEKW peptides may serve as metalloproteinase inhibitors during glandular storage. Their inhibition may be instantly disengaged, by dilution or physiochemical change, when venom is injected into tissue of the victim. Exhibits hypotensive and vasodepressor activity. Acts by activating natriuretic receptors (NPR1 and/or NPR2 and/or NPR3). This is Snake venom metalloprotease inhibitor 02A10 (Svmpi-Cce12) from Cerastes cerastes (Horned desert viper).